The following is a 389-amino-acid chain: Glycerol-3-phosphate dehydrogenase [NAD(+)] 2 (389 aa).

NAD(+) contacts are provided by residues Gly-40–Gly-45, Phe-128, Lys-151, and Ala-184. Lys-151 serves as a coordination point for substrate. The active-site Proton acceptor is the Lys-244. Residues Arg-309 and Gln-338 each coordinate NAD(+). Arg-309–Asn-310 lines the substrate pocket.

This sequence belongs to the NAD-dependent glycerol-3-phosphate dehydrogenase family.

It localises to the cytoplasm. It carries out the reaction sn-glycerol 3-phosphate + NAD(+) = dihydroxyacetone phosphate + NADH + H(+). The chain is Glycerol-3-phosphate dehydrogenase [NAD(+)] 2 (GPD2) from Zygosaccharomyces rouxii.